A 784-amino-acid polypeptide reads, in one-letter code: E3 UFM1-protein ligase 1 homolog (784 aa).

A disordered region spans residues 405–480 (SVSTQELEDD…RGGGAGNKKA (76 aa)). A compositionally biased stretch (basic residues) spans 444–454 (KSTKKHQRGKA).

This sequence belongs to the UFL1 family.

E3 UFM1-protein ligase that mediates ufmylation of target proteins. This Drosophila yakuba (Fruit fly) protein is E3 UFM1-protein ligase 1 homolog.